Consider the following 128-residue polypeptide: Glycine cleavage system H protein (128 aa).

One can recognise a Lipoyl-binding domain in the interval 22 to 104; sequence TVLVGITDYA…YGEGWIFRLK (83 aa). N6-lipoyllysine is present on K63.

The protein belongs to the GcvH family. As to quaternary structure, the glycine cleavage system is composed of four proteins: P, T, L and H. Monomer. The cofactor is (R)-lipoate.

In terms of biological role, the glycine cleavage system catalyzes the degradation of glycine. The H protein shuttles the methylamine group of glycine from the P protein to the T protein. The chain is Glycine cleavage system H protein from Thermus thermophilus (strain ATCC 27634 / DSM 579 / HB8).